We begin with the raw amino-acid sequence, 333 residues long: 4-hydroxythreonine-4-phosphate dehydrogenase (333 aa).

Residues histidine 133 and threonine 134 each coordinate substrate. A divalent metal cation contacts are provided by histidine 169, histidine 214, and histidine 269. Lysine 277, asparagine 286, and arginine 295 together coordinate substrate.

This sequence belongs to the PdxA family. In terms of assembly, homodimer. Requires Zn(2+) as cofactor. The cofactor is Mg(2+). It depends on Co(2+) as a cofactor.

The protein localises to the cytoplasm. The enzyme catalyses 4-(phosphooxy)-L-threonine + NAD(+) = 3-amino-2-oxopropyl phosphate + CO2 + NADH. The protein operates within cofactor biosynthesis; pyridoxine 5'-phosphate biosynthesis; pyridoxine 5'-phosphate from D-erythrose 4-phosphate: step 4/5. Its function is as follows. Catalyzes the NAD(P)-dependent oxidation of 4-(phosphooxy)-L-threonine (HTP) into 2-amino-3-oxo-4-(phosphooxy)butyric acid which spontaneously decarboxylates to form 3-amino-2-oxopropyl phosphate (AHAP). This Caulobacter vibrioides (strain ATCC 19089 / CIP 103742 / CB 15) (Caulobacter crescentus) protein is 4-hydroxythreonine-4-phosphate dehydrogenase.